We begin with the raw amino-acid sequence, 85 residues long: uncharacterized protein (85 aa).

A run of 2 helical transmembrane segments spans residues 13–35 and 59–81; these read KWLA…FQPL and EGIV…HLLL.

It is found in the cell membrane. This is an uncharacterized protein from Archaeoglobus fulgidus (strain ATCC 49558 / DSM 4304 / JCM 9628 / NBRC 100126 / VC-16).